A 447-amino-acid polypeptide reads, in one-letter code: UDP-glycosyltransferase 79B9 (447 aa).

Residues Ser-260, Val-319 to Gln-321, His-336 to Glu-344, and Leu-358 to Gln-361 each bind UDP-alpha-D-glucose.

This sequence belongs to the UDP-glycosyltransferase family.

The chain is UDP-glycosyltransferase 79B9 (UGT79B9) from Arabidopsis thaliana (Mouse-ear cress).